Reading from the N-terminus, the 1024-residue chain is Beta-galactosidase (1024 aa).

Residues N103 and D202 each contribute to the substrate site. D202 provides a ligand contact to Na(+). Mg(2+) contacts are provided by E417, H419, and E462. Residues E462 and 538–541 each bind substrate; that span reads EYAH. The Proton donor role is filled by E462. Catalysis depends on E538, which acts as the Nucleophile. N598 contributes to the Mg(2+) binding site. F602 and N605 together coordinate Na(+). The substrate site is built by N605 and W1000.

This sequence belongs to the glycosyl hydrolase 2 family. Homotetramer. Mg(2+) is required as a cofactor. It depends on Mn(2+) as a cofactor. Na(+) serves as cofactor.

The enzyme catalyses Hydrolysis of terminal non-reducing beta-D-galactose residues in beta-D-galactosides.. With respect to regulation, inhibited by phenylethyl thio-beta-D-galactoside (PETG), isopropyl thio-beta-D-galactoside (IPTG), L-ribose, D-galactonolactone, lactose and 2-amino-D-galactose. This is Beta-galactosidase (lacZ) from Escherichia coli (strain K12).